A 568-amino-acid polypeptide reads, in one-letter code: Dihydroxy-acid dehydratase 1 (568 aa).

Residues 1–22 are disordered; that stretch reads MAEQTNTPDLKPRSRDVTDGLE. The segment covering 10–22 has biased composition (basic and acidic residues); that stretch reads LKPRSRDVTDGLE. Cys-57 is a [2Fe-2S] cluster binding site. Asp-89 is a Mg(2+) binding site. Cys-130 contributes to the [2Fe-2S] cluster binding site. Positions 131 and 132 each coordinate Mg(2+). N6-carboxylysine is present on Lys-132. Cys-207 provides a ligand contact to [2Fe-2S] cluster. Glu-458 provides a ligand contact to Mg(2+). Catalysis depends on Ser-484, which acts as the Proton acceptor.

It belongs to the IlvD/Edd family. As to quaternary structure, homodimer. [2Fe-2S] cluster serves as cofactor. Mg(2+) is required as a cofactor.

The catalysed reaction is (2R)-2,3-dihydroxy-3-methylbutanoate = 3-methyl-2-oxobutanoate + H2O. The enzyme catalyses (2R,3R)-2,3-dihydroxy-3-methylpentanoate = (S)-3-methyl-2-oxopentanoate + H2O. It functions in the pathway amino-acid biosynthesis; L-isoleucine biosynthesis; L-isoleucine from 2-oxobutanoate: step 3/4. Its pathway is amino-acid biosynthesis; L-valine biosynthesis; L-valine from pyruvate: step 3/4. Functionally, functions in the biosynthesis of branched-chain amino acids. Catalyzes the dehydration of (2R,3R)-2,3-dihydroxy-3-methylpentanoate (2,3-dihydroxy-3-methylvalerate) into 2-oxo-3-methylpentanoate (2-oxo-3-methylvalerate) and of (2R)-2,3-dihydroxy-3-methylbutanoate (2,3-dihydroxyisovalerate) into 2-oxo-3-methylbutanoate (2-oxoisovalerate), the penultimate precursor to L-isoleucine and L-valine, respectively. The polypeptide is Dihydroxy-acid dehydratase 1 (Nocardia farcinica (strain IFM 10152)).